A 260-amino-acid polypeptide reads, in one-letter code: Transmembrane protein 106C (260 aa).

A lipid anchor (N-myristoyl glycine) is attached at Gly-2. Residues 85–105 (YVLLSVLLCLLASGLVFFFLF) form a helical membrane-spanning segment. N-linked (GlcNAc...) asparagine glycosylation is present at Asn-184. A helical membrane pass occupies residues 196–216 (SYVYFYCTLPAIRVHNIVIFM).

It belongs to the TMEM106 family. In terms of assembly, interacts with TMEM106B.

The protein resides in the endoplasmic reticulum membrane. It localises to the membrane. This Mus musculus (Mouse) protein is Transmembrane protein 106C (Tmem106c).